Reading from the N-terminus, the 309-residue chain is Olfactory receptor 7A10 (309 aa).

The Extracellular portion of the chain corresponds to 1 to 25 (MKSWNNTIILEFLLLGISEEPELQA). An N-linked (GlcNAc...) asparagine glycan is attached at Asn5. A helical transmembrane segment spans residues 26–46 (FLFGLFLSMYLVTVLGNLLII). Residues 47-54 (LATISDSH) lie on the Cytoplasmic side of the membrane. A helical membrane pass occupies residues 55 to 75 (LHTPMYFFLSNLSFVDICFVS). The Extracellular segment spans residues 76-99 (TTVPKMLVNIQTHNKVITYAGCIT). Cys97 and Cys189 are joined by a disulfide. Residues 100–120 (QMCFFLLFVGLDNFLLTVMAY) traverse the membrane as a helical segment. At 121–139 (DRFVAICHPLHYMVIMNPQ) the chain is on the cytoplasmic side. A helical transmembrane segment spans residues 140-160 (LCGLLVLASWIMSVLNSMLQS). At 161 to 197 (LMVLPLPFCTHMEIPHFFCEINQVVHLACSDTFLNDI) the chain is on the extracellular side. The helical transmembrane segment at 198 to 217 (VMYFAVALLGGGPLTGILYS) threads the bilayer. Topologically, residues 218–237 (YSKIVSSIRAISSAQGKYKA) are cytoplasmic. The helical transmembrane segment at 238–258 (FSTCASHLSVVSLFYGTCLGV) threads the bilayer. Residues 259 to 271 (YLSSAATHNSHTG) lie on the Extracellular side of the membrane. A helical membrane pass occupies residues 272-292 (AAASVMYTVVTPMLNPFIYSL). The Cytoplasmic segment spans residues 293–309 (RNKHIKGAMKTFFRGKQ).

Belongs to the G-protein coupled receptor 1 family.

Its subcellular location is the cell membrane. Its function is as follows. Odorant receptor. The sequence is that of Olfactory receptor 7A10 (OR7A10) from Homo sapiens (Human).